The sequence spans 1086 residues: NAD(P) transhydrogenase, mitochondrial (1086 aa).

The N-terminal 43 residues, methionine 1–tryptophan 43, are a transit peptide targeting the mitochondrion. Topologically, residues cysteine 44–threonine 474 are mitochondrial matrix. Lysine 70 is subject to N6-acetyllysine. Residue lysine 117 is modified to N6-succinyllysine. Arginine 182–threonine 184 lines the NAD(+) pocket. Lysine 224 bears the N6-succinyllysine mark. Residues valine 237, aspartate 257–arginine 259, and glycine 287 each bind NAD(+). Lysine 294 is subject to N6-succinyllysine. 2 residues coordinate NAD(+): glutamate 300 and leucine 319. Lysine 331 is subject to N6-succinyllysine. Position 397 is an N6-acetyllysine (lysine 397). 4 consecutive transmembrane segments (helical) span residues threonine 475 to alanine 493, methionine 501 to proline 521, leucine 527 to methionine 546, and serine 558 to threonine 578. At glutamine 579–asparagine 595 the chain is on the mitochondrial matrix side. Helical transmembrane passes span tyrosine 596–glycine 616, isoleucine 622–glycine 642, leucine 646–leucine 666, leucine 672–alanine 691, and leucine 702–tyrosine 722. At isoleucine 723–lysine 739 the chain is on the cytoplasmic side. The next 5 helical transmembrane spans lie at isoleucine 740–tyrosine 760, histidine 778–alanine 797, phenylalanine 801–glycine 819, valine 833–leucine 853, and leucine 857–alanine 879. Over methionine 880–lysine 1086 the chain is Mitochondrial matrix. Residues tyrosine 933, valine 965–proline 970, glycine 1007–threonine 1011, glycine 1026–methionine 1027, lysine 1042–tyrosine 1049, and aspartate 1068–alanine 1069 contribute to the NADP(+) site. Lysine 1079 carries the N6-succinyllysine modification.

It in the N-terminal section; belongs to the AlaDH/PNT family. In the C-terminal section; belongs to the PNT beta subunit family. In terms of assembly, homodimer. Widely expressed with expression most readily detectable in adrenal, heart, kidney, thyroid and adipose tissues.

It localises to the mitochondrion inner membrane. The enzyme catalyses NAD(+) + NADPH + H(+)(in) = NADH + NADP(+) + H(+)(out). Its function is as follows. The transhydrogenation between NADH and NADP is coupled to respiration and ATP hydrolysis and functions as a proton pump across the membrane. May play a role in reactive oxygen species (ROS) detoxification in the adrenal gland. The polypeptide is NAD(P) transhydrogenase, mitochondrial (Nnt) (Mus musculus (Mouse)).